The following is a 186-amino-acid chain: MIRGTMKIGITKMYKEIADLIGLEEYEIVNPYNTKVDCDFLIISKGYKERVKKLNPESEIFEVKSATFMDLIKSLEELKKLGIGKEGKIDKSIEFLKNKEKEIKKLVKDLNVKVNPKTEFIRKVVEDLGLEISDNGILIIPDYLFDGKNIENIIILKTHNYDLGLVERIEDRYLQIIQSIQKYLNK.

This is an uncharacterized protein from Methanocaldococcus jannaschii (strain ATCC 43067 / DSM 2661 / JAL-1 / JCM 10045 / NBRC 100440) (Methanococcus jannaschii).